A 392-amino-acid chain; its full sequence is Aspartate aminotransferase (392 aa).

G40, W126, and N176 together coordinate L-aspartate. Position 239 is an N6-(pyridoxal phosphate)lysine (K239).

The protein belongs to the class-I pyridoxal-phosphate-dependent aminotransferase family. In terms of assembly, homodimer. It depends on pyridoxal 5'-phosphate as a cofactor.

It localises to the cytoplasm. The catalysed reaction is L-aspartate + 2-oxoglutarate = oxaloacetate + L-glutamate. The chain is Aspartate aminotransferase from Bacillus sp. (strain YM-2).